A 201-amino-acid chain; its full sequence is Imidazole glycerol phosphate synthase subunit HisH (201 aa).

Positions 1–201 constitute a Glutamine amidotransferase type-1 domain; it reads MVFIADYGAG…LQVLRNFAEC (201 aa). Catalysis depends on C79, which acts as the Nucleophile. Active-site residues include H183 and E185.

Heterodimer of HisH and HisF.

It localises to the cytoplasm. It catalyses the reaction 5-[(5-phospho-1-deoxy-D-ribulos-1-ylimino)methylamino]-1-(5-phospho-beta-D-ribosyl)imidazole-4-carboxamide + L-glutamine = D-erythro-1-(imidazol-4-yl)glycerol 3-phosphate + 5-amino-1-(5-phospho-beta-D-ribosyl)imidazole-4-carboxamide + L-glutamate + H(+). It carries out the reaction L-glutamine + H2O = L-glutamate + NH4(+). It functions in the pathway amino-acid biosynthesis; L-histidine biosynthesis; L-histidine from 5-phospho-alpha-D-ribose 1-diphosphate: step 5/9. Its function is as follows. IGPS catalyzes the conversion of PRFAR and glutamine to IGP, AICAR and glutamate. The HisH subunit catalyzes the hydrolysis of glutamine to glutamate and ammonia as part of the synthesis of IGP and AICAR. The resulting ammonia molecule is channeled to the active site of HisF. The chain is Imidazole glycerol phosphate synthase subunit HisH from Chlorobium luteolum (strain DSM 273 / BCRC 81028 / 2530) (Pelodictyon luteolum).